A 1240-amino-acid polypeptide reads, in one-letter code: RNA2 polyprotein (1240 aa).

Residues Val1193 to Gly1210 are compositionally biased toward polar residues. The interval Val1193–Gly1240 is disordered.

This sequence belongs to the nepoviruses RNA2 polyprotein family. Specific enzymatic cleavages in vivo by the P1 encoded 3C-like protease yield mature proteins.

Its subcellular location is the host cell junction. The protein localises to the host plasmodesma. It is found in the virion. Implicated in RNA2 replication. Could also be required for nematode transmission of the virus. In terms of biological role, transports viral genome to neighboring plant cells directly through plasmosdesmata, without any budding. The movement protein allows efficient cell to cell propagation, by bypassing the host cell wall barrier. Acts by forming a tubular structure at the host plasmodesmata, enlarging it enough to allow free passage of virion capsids. This is RNA2 polyprotein from Cycas necrotic stunt virus (CNSV).